The sequence spans 273 residues: BTB and MATH domain-containing protein 15 (273 aa).

Residues Glu7–Val123 form the MATH domain. Residues Ser147 to Tyr206 form the BTB domain.

Interacts with cul-3.

The protein operates within protein modification; protein ubiquitination. Its function is as follows. Probable substrate-specific adapter of an E3 ubiquitin-protein ligase complex which mediates the ubiquitination and subsequent proteasomal degradation of target proteins. This chain is BTB and MATH domain-containing protein 15 (bath-15), found in Caenorhabditis elegans.